The following is a 375-amino-acid chain: Glutamate 5-kinase (375 aa).

Lys17 contacts ATP. Substrate contacts are provided by Ser57, Asp144, and Asn158. ATP is bound at residue 178-179; that stretch reads TD. The region spanning 284 to 360 is the PUA domain; that stretch reads SGSIVVDTGA…NEIADILGYK (77 aa).

It belongs to the glutamate 5-kinase family.

The protein resides in the cytoplasm. It carries out the reaction L-glutamate + ATP = L-glutamyl 5-phosphate + ADP. Its pathway is amino-acid biosynthesis; L-proline biosynthesis; L-glutamate 5-semialdehyde from L-glutamate: step 1/2. Catalyzes the transfer of a phosphate group to glutamate to form L-glutamate 5-phosphate. This is Glutamate 5-kinase from Methanococcoides burtonii (strain DSM 6242 / NBRC 107633 / OCM 468 / ACE-M).